We begin with the raw amino-acid sequence, 478 residues long: Protein nucleotidyltransferase YdiU (478 aa).

ATP is bound by residues Gly-84, Gly-86, Arg-87, Lys-107, Asp-119, Gly-120, Arg-170, and Arg-177. Residue Asp-246 is the Proton acceptor of the active site. Residues Asn-247 and Asp-256 each contribute to the Mg(2+) site. An ATP-binding site is contributed by Asp-256.

Belongs to the SELO family. It depends on Mg(2+) as a cofactor. Requires Mn(2+) as cofactor.

The enzyme catalyses L-seryl-[protein] + ATP = 3-O-(5'-adenylyl)-L-seryl-[protein] + diphosphate. The catalysed reaction is L-threonyl-[protein] + ATP = 3-O-(5'-adenylyl)-L-threonyl-[protein] + diphosphate. It catalyses the reaction L-tyrosyl-[protein] + ATP = O-(5'-adenylyl)-L-tyrosyl-[protein] + diphosphate. It carries out the reaction L-histidyl-[protein] + UTP = N(tele)-(5'-uridylyl)-L-histidyl-[protein] + diphosphate. The enzyme catalyses L-seryl-[protein] + UTP = O-(5'-uridylyl)-L-seryl-[protein] + diphosphate. The catalysed reaction is L-tyrosyl-[protein] + UTP = O-(5'-uridylyl)-L-tyrosyl-[protein] + diphosphate. In terms of biological role, nucleotidyltransferase involved in the post-translational modification of proteins. It can catalyze the addition of adenosine monophosphate (AMP) or uridine monophosphate (UMP) to a protein, resulting in modifications known as AMPylation and UMPylation. This Escherichia coli O139:H28 (strain E24377A / ETEC) protein is Protein nucleotidyltransferase YdiU.